The chain runs to 547 residues: Cytochrome P450 monooxygenase cpsD (547 aa).

The chain crosses the membrane as a helical span at residues 18-38; it reads LTGAALVVTLITSVIIVAADL. Cys476 is a binding site for heme. The interval 528 to 547 is disordered; that stretch reads RRRDARRTHEALGSKLKPEE. Positions 534 to 547 are enriched in basic and acidic residues; it reads RTHEALGSKLKPEE.

It belongs to the cytochrome P450 family. Requires heme as cofactor.

The protein localises to the membrane. It carries out the reaction campesine B + campesine C + reduced [NADPH--hemoprotein reductase] + O2 = campesine D + oxidized [NADPH--hemoprotein reductase] + 2 H2O + 2 H(+). It catalyses the reaction 2 campesine B + reduced [NADPH--hemoprotein reductase] + O2 = campesine F + oxidized [NADPH--hemoprotein reductase] + 2 H2O + H(+). The catalysed reaction is campesine C + campesine A + reduced [NADPH--hemoprotein reductase] + O2 = campesine E + oxidized [NADPH--hemoprotein reductase] + 2 H2O + 2 H(+). It functions in the pathway alkaloid biosynthesis. In terms of biological role, cytochrome P450 monooxygenase; part of the gene cluster that mediates the biosynthesis of campesine G, a dimeric indole piperazine alkaloid that shows good insecticidal activity Galleria mellonella. Within the pathway, cpsD acts as a dimerase that simultaneously catalyzes one C-C bond (C3-C3') and two C-N bonds (C2-N16' and C2'-N16) coupling reactions between campesines B and C to produce a heterodimer with unexpected 6/5/6/6/6/6/5/6 eight-ring scaffold called campesine D. CpsD is also able to catalyze oxidative heterocoupling od campesines A with B to produce campesine F and campesines A with C to produce campesine E. The non-canonical non-ribosomal peptide synthetase cpsA catalyzes the first steps of the pathway by producing L-tryptophanal and L-valinal from their respective amino-acids. These products condensate spontaneously to form trypyl-valyl pyrazine also known as didehydrocampesine A. The NmrA-like family domain-containing oxidoreductase cpsB is the next enzyme in cps pathway and reduces the unstable didehydrocampesine A to campesine A. The methyltransferase cpsF and the acetyltransferase cpsE both recognize N13 of piperazine ring to carry out methylation and acetylation of campesine A to produce campesine C and B, respectively. The cytochrome P450 monooxygenase cpsD then acts as a dimerase that catalyzes oxidative heterocoupling between campesine B and C to produce heterodimers with unexpected 6/5/6/6/6/6/5/6 eight-ring scaffold called campesine D. Finally,the cytochrome P450 monooxygenase cpsC is a regioselective dehydrogenase that catalyzes dehydrogenation reaction towards C2-N1 to produce campesine G. The sequence is that of Cytochrome P450 monooxygenase cpsD from Aspergillus campestris (strain IBT 28561).